The following is a 609-amino-acid chain: Phosphoenolpyruvate carboxykinase [GTP] (609 aa).

Residues Arg-81 and 220–222 (YGG) each bind substrate. The Mn(2+) site is built by Lys-229 and His-249. Ser-271 lines the substrate pocket. 272–277 (ACGKTN) provides a ligand contact to GTP. Residue Cys-273 is part of the active site. Asp-296 is a binding site for Mn(2+). A substrate-binding site is contributed by 387–389 (NSR). GTP is bound by residues Arg-389, Arg-420, and 515–518 (FGEN).

Belongs to the phosphoenolpyruvate carboxykinase [GTP] family. In terms of assembly, monomer. It depends on Mn(2+) as a cofactor.

Its subcellular location is the cytoplasm. The catalysed reaction is oxaloacetate + GTP = phosphoenolpyruvate + GDP + CO2. The protein operates within carbohydrate biosynthesis; gluconeogenesis. Functionally, catalyzes the conversion of oxaloacetate (OAA) to phosphoenolpyruvate (PEP), the rate-limiting step in the metabolic pathway that produces glucose from lactate and other precursors derived from the citric acid cycle. In Mycolicibacterium paratuberculosis (strain ATCC BAA-968 / K-10) (Mycobacterium paratuberculosis), this protein is Phosphoenolpyruvate carboxykinase [GTP].